Consider the following 501-residue polypeptide: Cilia- and flagella-associated protein 45 (501 aa).

The stretch at 75–114 forms a coiled coil; that stretch reads MTAEDVAAAKREAEAKREQLQAVSKARKEKMLKLEEEAKK.

The protein belongs to the CFAP45 family.

The protein resides in the cell projection. It is found in the cilium. Its subcellular location is the flagellum. The protein is Cilia- and flagella-associated protein 45 of Chlamydomonas reinhardtii (Chlamydomonas smithii).